Consider the following 1029-residue polypeptide: Toll-like receptor 9 (1029 aa).

An N-terminal signal peptide occupies residues 1-24 (MGPYCAPHPLSLLVQAAALAAALA). Residues 25–815 (QGTLPAFLPC…LCLDETLSLD (791 aa)) lie on the Extracellular side of the membrane. Residues Cys-34 and Cys-44 are joined by a disulfide bond. 46–50 (WLFLK) contributes to the DNA binding site. LRR repeat units follow at residues 61–84 (RANVTSLSLISNRIHHLHDSDFVH), 86–109 (SNLRVLNLKWNCPPAGLSPMHFPC), 121–146 (VPTLEELNLSYNGITTVPALPSSLVS), 149–165 (LSRTSILVLGPTHFTGL), 166–189 (HALRFLYMDGNCYYKNPCQQAVEV), 197–220 (LGNLTHLSLKYNNLTEVPRRLPPS), 222–241 (DTLLLSYNHIITLAPEDLAN), 242–267 (LTALRVLDVGGNCRRCDHARNPCREC), 282–305 (LSRLEGLVLKDSSLYKLEKDWFRG), 307–331 (GRLQVLDLSENFLYDYITKTTIFRN), 332–355 (LTQLRRLNLSFNYHKKVSFAHLQL), 362–385 (LVSLEKLDMHGIFFRSLTNTTLRP), 389–412 (LPKLQSLSLQLNFINQAELSIFGA), 414–439 (PSLLFVDLSDNRISGAARPVAALGEV), 469–492 (CNLNFTLDLSRNNLVTIQQEMFTR), 494–517 (SRLQCLRLSHNSISQAVNGSQFVP), 518–541 (LTRLRVLDLSYNKLDLYHGRSFTE), 543–570 (PQLEALDLSYNSQPFSMQGVGHNLSFVA), 572–596 (LPSLRYLSLAHNGIHSRVSQKLSSA), 598–620 (LRALDFSGNSLSQMWAEGDLYLC), 625–648 (LRNLVQLDLSKNHLHTLLPRHLDN), 650–673 (PKSLRQLRLRDNNLAFFNWSSLTV), 674–697 (LPQLEALDLAGNQLKALSNGSLPP), 699–721 (TRLQKLDVSSNSIGFVTPGFFVL), 722–745 (ANRLKELNLSANALKTVDPFWFGR), and 747–770 (TETLKILDVSANPLHCACGAAFVD). The N-linked (GlcNAc...) asparagine glycan is linked to Asn-63. DNA is bound by residues 71–76 (SNRIHH) and 94–108 (KWNCPPAGLSPMHFP). Cys-97 and Cys-109 are oxidised to a cystine. A glycan (N-linked (GlcNAc...) asparagine) is linked at Asn-128. DNA is bound by residues Tyr-131, Arg-151, and 178–180 (YYK). Residues Cys-177 and Cys-183 are joined by a disulfide bond. Residue Asn-199 is glycosylated (N-linked (GlcNAc...) asparagine). Residue Tyr-207 participates in DNA binding. N-linked (GlcNAc...) asparagine glycans are attached at residues Asn-209 and Asn-241. 2 disulfide bridges follow: Cys-254/Cys-267 and Cys-257/Cys-264. Cys-257 is lipidated: S-palmitoyl cysteine. Residue Arg-261 participates in DNA binding. A lipid anchor (S-palmitoyl cysteine) is attached at Cys-264. Asn-331, Asn-339, and Asn-380 each carry an N-linked (GlcNAc...) asparagine glycan. Residues Cys-469 and Cys-498 are joined by a disulfide bond. N-linked (GlcNAc...) asparagine glycosylation is found at Asn-472 and Asn-511. The N-linked (GlcNAc...) asparagine glycan is linked to Asn-565. N-linked (GlcNAc...) asparagine glycans are attached at residues Asn-667 and Asn-692. Asn-729 carries N-linked (GlcNAc...) asparagine glycosylation. 2 disulfide bridges follow: Cys-762/Cys-788 and Cys-764/Cys-807. Residues 816-836 (CFGFSLLMVALGLAVPMLHHL) traverse the membrane as a helical segment. Over 837-1029 (CGWDLWYCFH…NFCRGPTTAE (193 aa)) the chain is Cytoplasmic. Residues 864 to 1009 (LLYDAFVVFD…SFWANLGMAL (146 aa)) enclose the TIR domain.

It belongs to the Toll-like receptor family. Monomer and homodimer. Exists as a monomer in the absence of unmethylated cytidine-phosphate-guanosine (CpG) ligand. Proteolytic processing of an insertion loop (Z-loop) is required for homodimerization upon binding to the unmethylated CpG ligand leading to its activation. Interacts with MYD88 via their respective TIR domains. Interacts with BTK. Interacts (via transmembrane domain) with UNC93B1. Interacts with CD300LH; the interaction may promote full activation of TLR9-triggered innate responses. Interacts with CNPY3 and HSP90B1; this interaction is required for proper folding in the endoplasmic reticulum. Interacts with SMPDL3B. Interacts with CD82; this interaction is essential for TLR9-dependent myddosome formation in response to CpG stimulation. Post-translationally, activated by proteolytic cleavage of the flexible loop between repeats LRR14 and LRR15 within the ectodomain. Cleavage requires UNC93B1. Proteolytically processed by first removing the majority of the ectodomain by either asparagine endopeptidase (AEP) or a cathepsin followed by a trimming event that is solely cathepsin mediated and required for optimal receptor signaling. In terms of processing, palmitoylated by ZDHHC3 in the Golgi regulates TLR9 trafficking from the Golgi to endosomes. Depalmitoylation by PPT1 controls the release of TLR9 from UNC93B1 in endosomes.

The protein localises to the endoplasmic reticulum membrane. Its subcellular location is the endosome. The protein resides in the lysosome. It is found in the cytoplasmic vesicle. It localises to the phagosome. Key component of innate and adaptive immunity. TLRs (Toll-like receptors) control host immune response against pathogens through recognition of molecular patterns specific to microorganisms. TLR9 is a nucleotide-sensing TLR which is activated by unmethylated cytidine-phosphate-guanosine (CpG) dinucleotides. Acts via MYD88 and TRAF6, leading to NF-kappa-B activation, cytokine secretion and the inflammatory response. Upon CpG stimulation, induces B-cell proliferation, activation, survival and antibody production. The polypeptide is Toll-like receptor 9 (TLR9) (Ovis aries (Sheep)).